A 173-amino-acid polypeptide reads, in one-letter code: MTYLVSLFLLGLVLGLVAVASNPAPYFAALGLVVAAGVGCGVLVGHGGSFLSLVLFLIYLGGMLVVFAYSAALAAEPFPESWGDRSVLGYVVVYTVGVVLVAGLFWGGWYETSWVAVDEFKEFSVLRGDTSGVALMYSHGGGMLIACAWVLLLTLFVVLELTRGLSRGALRAV.

Helical transmembrane passes span 1 to 21 (MTYLVSLFLLGLVLGLVAVAS), 24 to 44 (APYFAALGLVVAAGVGCGVLV), 53 to 73 (LVLFLIYLGGMLVVFAYSAAL), 87 to 107 (VLGYVVVYTVGVVLVAGLFWG), and 141 to 161 (GGMLIACAWVLLLTLFVVLEL).

The protein belongs to the complex I subunit 6 family.

Its subcellular location is the mitochondrion membrane. It carries out the reaction a ubiquinone + NADH + 5 H(+)(in) = a ubiquinol + NAD(+) + 4 H(+)(out). Its function is as follows. Core subunit of the mitochondrial membrane respiratory chain NADH dehydrogenase (Complex I) that is believed to belong to the minimal assembly required for catalysis. Complex I functions in the transfer of electrons from NADH to the respiratory chain. The immediate electron acceptor for the enzyme is believed to be ubiquinone. This Oncorhynchus mykiss (Rainbow trout) protein is NADH-ubiquinone oxidoreductase chain 6 (MT-ND6).